A 228-amino-acid chain; its full sequence is Cytidylate kinase (228 aa).

17-25 (GPTASGKGT) is a binding site for ATP.

The protein belongs to the cytidylate kinase family. Type 1 subfamily.

It is found in the cytoplasm. It carries out the reaction CMP + ATP = CDP + ADP. It catalyses the reaction dCMP + ATP = dCDP + ADP. This chain is Cytidylate kinase, found in Burkholderia vietnamiensis (strain G4 / LMG 22486) (Burkholderia cepacia (strain R1808)).